The primary structure comprises 759 residues: Catalase-peroxidase (759 aa).

Residues 1-24 (MTQDKCPFKEQPSQPNFAGGGTSN) form a disordered region. Residues 96-242 (WHSAGTYRVF…LAAAHMGLIY (147 aa)) constitute a cross-link (tryptophyl-tyrosyl-methioninium (Trp-Tyr) (with M-268)). Residue His97 is the Proton acceptor of the active site. The tryptophyl-tyrosyl-methioninium (Tyr-Met) (with W-96) cross-link spans 242–268 (YVNPEGPDGNPDPIAAAHDIRDTFGRM). His283 serves as a coordination point for heme b.

The protein belongs to the peroxidase family. Peroxidase/catalase subfamily. Homodimer or homotetramer. Heme b serves as cofactor. In terms of processing, formation of the three residue Trp-Tyr-Met cross-link is important for the catalase, but not the peroxidase activity of the enzyme.

The protein resides in the cytoplasm. It carries out the reaction H2O2 + AH2 = A + 2 H2O. The catalysed reaction is 2 H2O2 = O2 + 2 H2O. Bifunctional enzyme with both catalase and broad-spectrum peroxidase activity. This chain is Catalase-peroxidase, found in Neosartorya fischeri (strain ATCC 1020 / DSM 3700 / CBS 544.65 / FGSC A1164 / JCM 1740 / NRRL 181 / WB 181) (Aspergillus fischerianus).